We begin with the raw amino-acid sequence, 436 residues long: CaM kinase-like vesicle-associated protein (436 aa).

A Protein kinase domain is found at 24 to 286; sequence YDLGQIVKSE…AQEAINHEWI (263 aa). The interval 328–436 is disordered; sequence APENQTAAAT…ALDTVEEQSG (109 aa). A compositionally biased stretch (low complexity) spans 333–409; it reads TAAATAPAAE…QPPAEPVVHV (77 aa).

This sequence belongs to the protein kinase superfamily. CAMK Ser/Thr protein kinase family. Interacts with calmodulin, in the presence of calcium. The cofactor is Ca(2+).

The protein localises to the cytoplasmic vesicle membrane. Does not appear to have detectable kinase activity. The protein is CaM kinase-like vesicle-associated protein (camkv) of Danio rerio (Zebrafish).